Consider the following 246-residue polypeptide: Pyridoxine 5'-phosphate synthase (246 aa).

Residue asparagine 12 participates in 3-amino-2-oxopropyl phosphate binding. A 1-deoxy-D-xylulose 5-phosphate-binding site is contributed by 14–15 (DH). Arginine 23 lines the 3-amino-2-oxopropyl phosphate pocket. The active-site Proton acceptor is histidine 48. 1-deoxy-D-xylulose 5-phosphate-binding residues include arginine 50 and histidine 55. The active-site Proton acceptor is the glutamate 75. 1-deoxy-D-xylulose 5-phosphate is bound at residue threonine 105. Histidine 196 functions as the Proton donor in the catalytic mechanism. 3-amino-2-oxopropyl phosphate contacts are provided by residues glycine 197 and 218–219 (GH).

It belongs to the PNP synthase family. As to quaternary structure, homooctamer; tetramer of dimers.

It localises to the cytoplasm. It carries out the reaction 3-amino-2-oxopropyl phosphate + 1-deoxy-D-xylulose 5-phosphate = pyridoxine 5'-phosphate + phosphate + 2 H2O + H(+). It functions in the pathway cofactor biosynthesis; pyridoxine 5'-phosphate biosynthesis; pyridoxine 5'-phosphate from D-erythrose 4-phosphate: step 5/5. Functionally, catalyzes the complicated ring closure reaction between the two acyclic compounds 1-deoxy-D-xylulose-5-phosphate (DXP) and 3-amino-2-oxopropyl phosphate (1-amino-acetone-3-phosphate or AAP) to form pyridoxine 5'-phosphate (PNP) and inorganic phosphate. In Thioalkalivibrio sulfidiphilus (strain HL-EbGR7), this protein is Pyridoxine 5'-phosphate synthase.